The sequence spans 281 residues: Para-Rep C1 (281 aa).

The CRESS-DNA virus Rep endonuclease domain occupies 3–97; the sequence is TLQGTFWCFT…VAGPWTYGEL (95 aa). The RCR-1 signature appears at 10 to 13; sequence CFTL. The a divalent metal cation site is built by glutamate 36 and histidine 42. An RCR-2 motif is present at residues 42-44; that stretch reads HLQ. The short motif at 51–71 is the Nuclear localization signal element; it reads KRSTLKMMKELLPGAHLEVSK. Tyrosine 80 serves as the catalytic For DNA cleavage activity. The short motif at 80 to 83 is the RCR-3 element; sequence YAMK. Position 85 (glutamate 85) interacts with a divalent metal cation. The short motif at 97-103 is the Nuclear localization signal element; it reads LLKKGSN. 173 to 181 provides a ligand contact to ATP; the sequence is GPQGGEGKT.

Belongs to the nanoviridea/circoviridae replication-associated protein family. As to quaternary structure, homooligomer (Potential). Rep binds to repeated DNA motifs (iterons). It depends on Mg(2+) as a cofactor. Mn(2+) serves as cofactor.

Its subcellular location is the host nucleus. It catalyses the reaction ATP + H2O = ADP + phosphate + H(+). Functionally, initiates and terminates the replication only of its own subviral DNA molecule. The closed circular ssDNA genome is first converted to a superhelical dsDNA. Rep binds a specific hairpin at the genome origin of replication. Introduces an endonucleolytic nick within the intergenic region of the genome, thereby initiating the rolling circle replication (RCR). Following cleavage, binds covalently to the 5'-phosphate of DNA as a tyrosyl ester. The cleavage gives rise to a free 3'-OH that serves as a primer for the cellular DNA polymerase. The polymerase synthesizes the (+) strand DNA by rolling circle mechanism. After one round of replication, a Rep-catalyzed nucleotidyl transfer reaction releases a circular single-stranded virus genome, thereby terminating the replication. Displays origin-specific DNA cleavage, nucleotidyl transferase, ATPase and helicase activities. In Milk vetch dwarf C1 alphasatellite (MVDC1A), this protein is Para-Rep C1 (C1).